The following is a 114-amino-acid chain: uncharacterized protein (114 aa).

A run of 2 helical transmembrane segments spans residues 9-29 and 75-95; these read LAIF…SFWL and LVHF…VAII.

Its subcellular location is the cell membrane. This is an uncharacterized protein from Mycoplasma pneumoniae (strain ATCC 29342 / M129 / Subtype 1) (Mycoplasmoides pneumoniae).